We begin with the raw amino-acid sequence, 697 residues long: MMRPVVVKEKQLNKSQIHAVEDEVRQAKTMDRDIVTHAMKQSVAKLNPKVMIKNPIMFVVEIGFIITFILSFLPSSSSSIPGWFNITVSLILLFTVLFANFAEALAEGRGKAQADSLKQSKKDVFANVVKENGDIVQVSATDLRKGDVVIVKQGEMIPNDGEVIKGLASVDESAITGESAPVIKEAGGDFCSVTGGTMVVSDEITIVITSNPGESFIDKMISLVEGAARQKTPNEIALNTVLTSLTLIFLIVVVTLPIFTNYLGFQIDTAVLVALLVCLIPTTIGGLLSAIGIAGMDRVTKFNVLAMSGKAVEAAGDINTIILDKTGTITFGNRMAHTLLPVGNETIEQVGKWAAISSVLDETPEGRSVIEYVQGKSISYNRELAEQGEFVPFKAETRMSGVDLQDGTKVRKGAVGAVIEWVESQGGTIPKDVNQKADLISKEGGTPLVVAVDNRIYGLIYLKDTVKPGMRERFEQLRQMGIKTVMCTGDNPLTAATIAKEAGVDEFVAECKPEDKIAVIKAEQDKGKLVAMTGDGTNDAPALAQADVGLAMNSGTTAAKEAANMIDLDSNPTKIIEVVGIGKQLLMTRGALTTFSIANDIAKYFAIIPAMFTLAIPQMEALNIMKLTSPLSAILSALIFNAVIIPLLIPLAMKGIAYKPMSSNALLSRNLLIYGLGGVIVPFIGIKVIDIIVGLFI.

Helical transmembrane passes span 55 to 75 (PIMF…FLPS), 79 to 99 (SIPG…VLFA), 245 to 265 (LTLI…YLGF), and 271 to 291 (VLVA…LSAI). The active-site 4-aspartylphosphate intermediate is the aspartate 324. ATP-binding positions include aspartate 361, glutamate 365, 393-400 (FKAETRMS), and lysine 412. Positions 535 and 539 each coordinate Mg(2+). 3 helical membrane passes run 605–625 (FAII…LNIM), 633–653 (AILS…PLAM), and 677–697 (GGVI…GLFI).

It belongs to the cation transport ATPase (P-type) (TC 3.A.3) family. Type IA subfamily. The system is composed of three essential subunits: KdpA, KdpB and KdpC.

The protein localises to the cell membrane. It catalyses the reaction K(+)(out) + ATP + H2O = K(+)(in) + ADP + phosphate + H(+). In terms of biological role, part of the high-affinity ATP-driven potassium transport (or Kdp) system, which catalyzes the hydrolysis of ATP coupled with the electrogenic transport of potassium into the cytoplasm. This subunit is responsible for energy coupling to the transport system and for the release of the potassium ions to the cytoplasm. This is Potassium-transporting ATPase ATP-binding subunit from Bacillus cereus (strain G9842).